Reading from the N-terminus, the 146-residue chain is Alpha-amylase inhibitor BMAI-1 (146 aa).

The signal sequence occupies residues 1–14 (PTSVAVDQGSMVSN). Asn-125 is a glycosylation site (N-linked (GlcNAc...) asparagine).

Belongs to the protease inhibitor I6 (cereal trypsin/alpha-amylase inhibitor) family. In terms of assembly, monomer. Post-translationally, five disulfide bonds, which are essential for the inhibitor activity, are probably present. In terms of processing, glycosylated. Endosperm.

It is found in the secreted. Could be involved in insect defense mechanisms. Inhibits insect-type alpha-amylase. The chain is Alpha-amylase inhibitor BMAI-1 (IAM1) from Hordeum vulgare (Barley).